The primary structure comprises 901 residues: MLIKLLTKVFGSRNDRTLRRMRKVVNIINAMEPEMEKLSDEELKGKTAEFRARLEKGEVLENLIPEAFAVVREASKRVFGMRHFDVQLLGGMVLNERCIAEMRTGEGKTLTATLPAYLNALTGKGVHVVTVNDYLAQRDAENNRPLFEFLGLTVGINLPGMPAPAKREAYAADITYGTNNEYGFDYLRDNMAFSPEERVQRKLHYALVDEVDSILIDEARTPLIISGPAEDSSEMYKRVNKIIPHLIRQEKEDSETFQGEGHFSVDEKSRQVNLTERGLVLIEELLVKEGIMDEGESLYSPANIMLMHHVTAALRAHALFTRDVDYIVKDGEVIIVDEHTGRTMQGRRWSDGLHQAVEAKEGVQIQNENQTLASITFQNYFRLYEKLAGMTGTADTEAFEFSSIYKLDTVVVPTNRPMIRKDLPDLVYMTEAEKIQAIIEDIKERTAKGQPVLVGTISIEKSELVSNELTKAGIKHNVLNAKFHANEAAIVAQAGYPAAVTIATNMAGRGTDIVLGGSWQAEVAALENPTAEQIEKIKADWQVRHDAVLEAGGLHIIGTERHESRRIDNQLRGRSGRQGDAGSSRFYLSMEDALMRIFASDRVSGMMRKLGMKPGEAIEHPWVTKAIANAQRKVESRNFDIRKQLLEYDDVANDQRRAIYSQRNELLDVSDVSETINSIREDVFKATIDAYIPPQSLEEMWDIPGLQERLKNDFDLDLPIAEWLDKEPELHEETLRERILAQSIEVYQRKEEVVGAEMMRHFEKGVMLQTLDSLWKEHLAAMDYLRQGIHLRGYAQKDPKQEYKRESFSMFAAMLESLKYEVISTLSKVQVRMPEEVEELEQQRRMEAERLAQMQQLSHQDDDSAAAAALAAQTGERKVGRNDPCPCGSGKKYKQCHGRLQ.

ATP is bound by residues glutamine 87, 105–109 (GEGKT), and aspartate 512. Positions 859-901 (HQDDDSAAAAALAAQTGERKVGRNDPCPCGSGKKYKQCHGRLQ) are disordered. Positions 885, 887, 896, and 897 each coordinate Zn(2+). The segment covering 891–901 (KKYKQCHGRLQ) has biased composition (basic residues).

This sequence belongs to the SecA family. Monomer and homodimer. Part of the essential Sec protein translocation apparatus which comprises SecA, SecYEG and auxiliary proteins SecDF-YajC and YidC. Zn(2+) serves as cofactor.

The protein resides in the cell inner membrane. The protein localises to the cytoplasm. The catalysed reaction is ATP + H2O + cellular proteinSide 1 = ADP + phosphate + cellular proteinSide 2.. In terms of biological role, part of the Sec protein translocase complex. Interacts with the SecYEG preprotein conducting channel. Has a central role in coupling the hydrolysis of ATP to the transfer of proteins into and across the cell membrane, serving both as a receptor for the preprotein-SecB complex and as an ATP-driven molecular motor driving the stepwise translocation of polypeptide chains across the membrane. The sequence is that of Protein translocase subunit SecA from Escherichia coli O139:H28 (strain E24377A / ETEC).